The primary structure comprises 492 residues: N-succinylglutamate 5-semialdehyde dehydrogenase (492 aa).

220–225 (GSANTG) is an NAD(+) binding site. Residues E243 and C277 contribute to the active site.

Belongs to the aldehyde dehydrogenase family. AstD subfamily.

The catalysed reaction is N-succinyl-L-glutamate 5-semialdehyde + NAD(+) + H2O = N-succinyl-L-glutamate + NADH + 2 H(+). Its pathway is amino-acid degradation; L-arginine degradation via AST pathway; L-glutamate and succinate from L-arginine: step 4/5. Catalyzes the NAD-dependent reduction of succinylglutamate semialdehyde into succinylglutamate. This Shigella flexneri serotype 5b (strain 8401) protein is N-succinylglutamate 5-semialdehyde dehydrogenase.